We begin with the raw amino-acid sequence, 192 residues long: Fe/S biogenesis protein NfuA (192 aa).

C149 and C152 together coordinate [4Fe-4S] cluster.

This sequence belongs to the NfuA family. In terms of assembly, homodimer. It depends on [4Fe-4S] cluster as a cofactor.

In terms of biological role, involved in iron-sulfur cluster biogenesis. Binds a 4Fe-4S cluster, can transfer this cluster to apoproteins, and thereby intervenes in the maturation of Fe/S proteins. Could also act as a scaffold/chaperone for damaged Fe/S proteins. The protein is Fe/S biogenesis protein NfuA of Shewanella amazonensis (strain ATCC BAA-1098 / SB2B).